A 419-amino-acid polypeptide reads, in one-letter code: 2-amino-3-ketobutyrate coenzyme A ligase, mitochondrial (419 aa).

A mitochondrion-targeting transit peptide spans 1–21 (MWPGNAWRAALFWVPRGRRAQ). Lys-45 is modified (N6-acetyllysine; alternate). At Lys-45 the chain carries N6-succinyllysine; alternate. Pyridoxal 5'-phosphate is bound at residue 134–135 (CY). His-159 lines the substrate pocket. Lys-187 bears the N6-acetyllysine; alternate mark. N6-succinyllysine; alternate is present on Lys-187. Pyridoxal 5'-phosphate is bound by residues Ser-206, 262 to 265 (TLGK), and 295 to 296 (SN). At Lys-265 the chain carries N6-(pyridoxal phosphate)lysine. An N6-succinyllysine mark is found at Lys-326 and Lys-368. Lys-383 is subject to N6-acetyllysine; alternate. Lys-383 carries the N6-succinyllysine; alternate modification. Position 389 (Arg-389) interacts with substrate.

Belongs to the class-II pyridoxal-phosphate-dependent aminotransferase family. Pyridoxal 5'-phosphate is required as a cofactor. As to expression, strongly expressed in heart, brain, liver and pancreas. Also found in lung.

It is found in the mitochondrion. Its subcellular location is the nucleus. It carries out the reaction glycine + acetyl-CoA = (2S)-2-amino-3-oxobutanoate + CoA. Pyridoxal phosphate (PLP) dependent enzyme, which catalyzes the cleavage of 2-amino-3-oxobutanoate to glycine and acetyl-CoA. This is 2-amino-3-ketobutyrate coenzyme A ligase, mitochondrial from Homo sapiens (Human).